Reading from the N-terminus, the 1027-residue chain is Abnormal embryogenesis protein 30 (1027 aa).

2 WD repeats span residues 18 to 65 (RTPF…IQAV) and 70 to 109 (KLDS…VRFS). 2 disordered regions span residues 619-655 (NDSS…ACDL) and 1005-1027 (AMDS…DDDI). Acidic residues-rich tracts occupy residues 625–647 (LEED…EPEG) and 1014–1027 (DNGE…DDDI).

The protein belongs to the APC4 family. In terms of assembly, the APC/C is probably composed of at least 12 subunits: apc-2, apc-10, apc-11, cdc-26, emb-1, emb-27, emb-30, mat-1, mat-2, mat-3, such-1 and gfi-3.

It functions in the pathway protein modification; protein ubiquitination. In terms of biological role, probable component of the anaphase promoting complex/cyclosome (APC/C), a cell cycle-regulated E3 ubiquitin ligase that controls progression through mitosis and the G1 phase of the cell cycle. The APC/C complex acts by mediating ubiquitination and subsequent degradation of target proteins. Developmental role in early embryogenesis and the metaphase to anaphase transition in oocyte and spermatocyte meiosis and mitosis in somatic and germ cells. Required for embryonic anterior-posterior axis formation. Negatively regulates ify-1 protein levels during meiosis I. Plays a role in regulating the abundance of glr-1 receptors in postmitotic neurons, which may in turn control animal locomotion. Involved in regulating GABA neurotransmitter release at neuromuscular junctions in GABA motor neurons. The protein is Abnormal embryogenesis protein 30 of Caenorhabditis elegans.